A 337-amino-acid chain; its full sequence is 4-hydroxyproline 2-epimerase 2 (337 aa).

Catalysis depends on Cys-90, which acts as the Proton acceptor. Substrate-binding positions include 91–92, His-223, and Asp-249; that span reads GH. Cys-253 serves as the catalytic Proton donor. 254-255 is a binding site for substrate; that stretch reads GT.

Belongs to the proline racemase family.

The enzyme catalyses trans-4-hydroxy-L-proline = cis-4-hydroxy-D-proline. Its function is as follows. Catalyzes the epimerization of trans-4-hydroxy-L-proline (t4LHyp) to cis-4-hydroxy-D-proline (c4DHyp). Is likely involved in a degradation pathway that converts t4LHyp to alpha-ketoglutarate. Can also catalyze the epimerization of trans-3-hydroxy-L-proline (t3LHyp) to cis-3-hydroxy-D-proline (c3DHyp), albeit with 170-fold lower efficiency. Displays no proline racemase activity. This is 4-hydroxyproline 2-epimerase 2 from Brucella anthropi (strain ATCC 49188 / DSM 6882 / CCUG 24695 / JCM 21032 / LMG 3331 / NBRC 15819 / NCTC 12168 / Alc 37) (Ochrobactrum anthropi).